A 184-amino-acid polypeptide reads, in one-letter code: Zinc metalloproteinase-disintegrin-like ammodytagin (184 aa).

A Peptidase M12B domain is found at 1 to 90 (KSAAXVTLDL…CPAKCIDNKP (90 aa)). Asp-20 lines the Ca(2+) pocket. His-64 serves as a coordination point for Zn(2+). The active site involves Glu-65. His-68 and His-74 together coordinate Zn(2+). The Ca(2+) site is built by Asn-88, Val-100, Asn-103, Phe-105, and Glu-107. A Disintegrin domain is found at 98–124 (PAVCGNYFVELTPGSQCADGVCCDQCR). 2 disulfides stabilise this stretch: Cys-114–Cys-120 and Cys-165–Cys-177.

It belongs to the venom metalloproteinase (M12B) family. P-III subfamily. P-IIIc sub-subfamily. As to quaternary structure, heterodimer; disulfide-linked. Zn(2+) serves as cofactor. Post-translationally, the N-terminus is blocked. N-glycosylated. As to expression, expressed by the venom gland.

It localises to the secreted. Its activity is regulated as follows. Inhibited by EDTA, DTT and zinc ions. Partially inhibited by L-cysteine. Not inhibited by 2-propanol or PMSF. Activity is enhanced by calcium or magnesium ions. Functionally, snake venom zinc metalloprotease that has fibrinogenolytic and hemorrhagic activities in mouse and rats. Hydrolyzes the Aalpha-chain (FGA) and more slowly the Bbeta-chain of fibrinogen (FGB), without affecting the gamma-chain. Its hemorrhagic activity results of its involvement in cleavage of basal membrane components (nidogen and fibronectin but not laminin) and depletion of fibrinogen, prothrombin (F2) and factor X (F10) in blood circulation. Also possess potent azocaseinolytic activity and cleaves insulin B-chain, hydrolyzing it at positions Gln(4)-His(5), His(10)-Leu(11) and Tyr(16)-Leu(17). This Vipera ammodytes ammodytes (Western sand viper) protein is Zinc metalloproteinase-disintegrin-like ammodytagin.